We begin with the raw amino-acid sequence, 106 residues long: Thioredoxin-like protein YusE (106 aa).

The Thioredoxin domain maps to 1-101 (MKELQEHELD…LYELIKQKSS (101 aa)). The cysteines at positions 26 and 29 are disulfide-linked.

The polypeptide is Thioredoxin-like protein YusE (yusE) (Bacillus subtilis (strain 168)).